The primary structure comprises 276 residues: Light-independent protochlorophyllide reductase iron-sulfur ATP-binding protein (276 aa).

ATP is bound by residues 12–17 and Lys-41; that span reads GIGKST. Ser-16 contacts Mg(2+). Positions 97 and 131 each coordinate [4Fe-4S] cluster. Position 182–183 (182–183) interacts with ATP; that stretch reads NR.

Belongs to the NifH/BchL/ChlL family. In terms of assembly, homodimer. Protochlorophyllide reductase is composed of three subunits; BchL, BchN and BchB. It depends on [4Fe-4S] cluster as a cofactor.

The catalysed reaction is chlorophyllide a + oxidized 2[4Fe-4S]-[ferredoxin] + 2 ADP + 2 phosphate = protochlorophyllide a + reduced 2[4Fe-4S]-[ferredoxin] + 2 ATP + 2 H2O. Its pathway is porphyrin-containing compound metabolism; bacteriochlorophyll biosynthesis (light-independent). Functionally, component of the dark-operative protochlorophyllide reductase (DPOR) that uses Mg-ATP and reduced ferredoxin to reduce ring D of protochlorophyllide (Pchlide) to form chlorophyllide a (Chlide). This reaction is light-independent. The L component serves as a unique electron donor to the NB-component of the complex, and binds Mg-ATP. This chain is Light-independent protochlorophyllide reductase iron-sulfur ATP-binding protein, found in Chlorobium luteolum (strain DSM 273 / BCRC 81028 / 2530) (Pelodictyon luteolum).